The chain runs to 391 residues: Ferrochelatase (391 aa).

The Fe cation site is built by His-196 and Glu-281.

This sequence belongs to the ferrochelatase family.

It localises to the cytoplasm. It carries out the reaction heme b + 2 H(+) = protoporphyrin IX + Fe(2+). It participates in porphyrin-containing compound metabolism; protoheme biosynthesis; protoheme from protoporphyrin-IX: step 1/1. Its function is as follows. Catalyzes the ferrous insertion into protoporphyrin IX. The protein is Ferrochelatase of Prochlorococcus marinus (strain MIT 9211).